The following is a 154-amino-acid chain: Ribonuclease H (154 aa).

An RNase H type-1 domain is found at 5–146 (EQNIVYLYCD…ADELANRGID (142 aa)). Mg(2+) contacts are provided by Asp-14, Glu-52, Asp-74, and Asp-138.

Belongs to the RNase H family. As to quaternary structure, monomer. Mg(2+) is required as a cofactor.

It is found in the cytoplasm. It carries out the reaction Endonucleolytic cleavage to 5'-phosphomonoester.. In terms of biological role, endonuclease that specifically degrades the RNA of RNA-DNA hybrids. The protein is Ribonuclease H of Coxiella burnetii (strain RSA 331 / Henzerling II).